We begin with the raw amino-acid sequence, 307 residues long: O-acetylserine dependent cystathionine beta-synthase (307 aa).

An N6-(pyridoxal phosphate)lysine modification is found at Lys-44. Pyridoxal 5'-phosphate contacts are provided by residues Asn-74, 178–182, and Ser-265; that span reads GSGGT.

The protein belongs to the cysteine synthase/cystathionine beta-synthase family. Pyridoxal 5'-phosphate is required as a cofactor.

The enzyme catalyses O-acetyl-L-serine + L-homocysteine = L,L-cystathionine + acetate + H(+). Catalyzes the conversion of O-acetylserine and homocysteine to cystathionine. This is O-acetylserine dependent cystathionine beta-synthase (mccA) from Bacillus subtilis (strain 168).